Consider the following 217-residue polypeptide: MOB kinase activator 3A (217 aa).

Cys83, Cys88, His165, and His170 together coordinate Zn(2+).

Belongs to the MOB1/phocein family.

May regulate the activity of kinases. This is MOB kinase activator 3A (Mob3a) from Mus musculus (Mouse).